We begin with the raw amino-acid sequence, 262 residues long: Virulence regulon transcriptional activator VirF (262 aa).

The HTH araC/xylS-type domain occupies Asp-161–Tyr-258. DNA-binding regions (H-T-H motif) lie at residues Ser-178–Lys-199 and Ile-225–Tyr-248.

As to quaternary structure, homodimer.

Functionally, primary regulator of plasmid-encoded virulence genes. Activates the transcription of icsA (virG) and of virB, which is an activator of the ipaABCD virulence regulon. The sequence is that of Virulence regulon transcriptional activator VirF (virF) from Shigella dysenteriae.